The chain runs to 395 residues: NAD(P)H-quinone oxidoreductase subunit H, chloroplastic (395 aa).

Belongs to the complex I 49 kDa subunit family. In terms of assembly, NDH is composed of at least 16 different subunits, 5 of which are encoded in the nucleus.

The protein resides in the plastid. It localises to the chloroplast thylakoid membrane. The enzyme catalyses a plastoquinone + NADH + (n+1) H(+)(in) = a plastoquinol + NAD(+) + n H(+)(out). It catalyses the reaction a plastoquinone + NADPH + (n+1) H(+)(in) = a plastoquinol + NADP(+) + n H(+)(out). Functionally, NDH shuttles electrons from NAD(P)H:plastoquinone, via FMN and iron-sulfur (Fe-S) centers, to quinones in the photosynthetic chain and possibly in a chloroplast respiratory chain. The immediate electron acceptor for the enzyme in this species is believed to be plastoquinone. Couples the redox reaction to proton translocation, and thus conserves the redox energy in a proton gradient. This chain is NAD(P)H-quinone oxidoreductase subunit H, chloroplastic, found in Coffea arabica (Arabian coffee).